Reading from the N-terminus, the 1830-residue chain is Guanine nucleotide exchange factor SPIKE 1 (1830 aa).

Methionine 1 is subject to N-acetylmethionine. Positions 285-304 are disordered; sequence NTGESASPSSPLAPSMTASS. Residues 289-304 show a composition bias toward low complexity; it reads SASPSSPLAPSMTASS. Positions 463 to 622 constitute a C2 DOCK-type domain; that stretch reads FHCLYVYPVA…NIFKLRLRLC (160 aa). A Phosphoserine modification is found at serine 1051. Threonine 1079 carries the phosphothreonine modification. Residue serine 1095 is modified to Phosphoserine. The 450-residue stretch at 1379–1828 folds into the DOCKER domain; the sequence is MAFAPVPDLH…LSHYIPAILS (450 aa).

It belongs to the DOCK family. Homodimer. Component of SCAR/WAVE and ARP2/3 complexes. Interacts directly with ARAC4/ROP2, ARAC1/ROP3, ARAC5/ROP4, ARAC6/ROP5, ARAC8/ROP10, ARAC9/ROP8, SCAR1, SCAR2, SCAR3, SCAR4, ABI1, ABI2, ABI3 and ABI4. Binds to the inactive GDP-bound form of ARAC3/ROP6. In terms of tissue distribution, expressed ubiquitously, in roots and aerial organs.

Its subcellular location is the cytoplasm. The protein localises to the endoplasmic reticulum membrane. It is found in the nucleus. Functionally, guanine nucleotide exchange factor (GEF) for Rho and Rac. GEF proteins activate small GTPases by exchanging bound GDP for free GTP. Controls actin polymerization via the two heteromeric complexes WAVE and actin-related protein (ARP) 2/3. Involved in cytoskeletal reorganization required for cell shape (e.g. trichome and cotyledon) control and tissue development. Prevents cortical microtubules organization into parallel arrays oriented perpendicular to the axis of cell elongation to limit anisotropic cell growth during petal development, probably by triggering ARAC4/ROP2 and ARAC3/ROP6 activity. Promotes polarized growth and cell-cell adhesion in the leaf epidermis probably by promoting the formation of endoplasmic reticulum (ER) exit site (ERES) and/or trafficking between the ER and Golgi. Triggers ARAC3/ROP6 activation required for auxin-mediated inhibition of PIN2 internalization during gravitropic responses (, PubMed:22683260). The chain is Guanine nucleotide exchange factor SPIKE 1 from Arabidopsis thaliana (Mouse-ear cress).